Reading from the N-terminus, the 281-residue chain is Protein-S-isoprenylcysteine O-methyltransferase (281 aa).

The Cytoplasmic portion of the chain corresponds to 1-2; sequence ML. Residues 3–29 form a helical membrane-spanning segment; sequence SPAGKISLQSFTGSSLVFFVICMFNHY. The Lumenal portion of the chain corresponds to 30-35; sequence YGITNL. The helical transmembrane segment at 36–53 threads the bilayer; the sequence is VVNTLIVFFYAVNVYFFL. Residues 54–58 lie on the Cytoplasmic side of the membrane; that stretch reads KFFYN. Residues 59–85 traverse the membrane as a helical segment; that stretch reads EFAFAIAIRAAFLGLVLVLGLYIKLVA. At 86–88 the chain is on the lumenal side; sequence PPN. The helical transmembrane segment at 89–113 threads the bilayer; sequence IQIFGGYMSVMALFHYSEFLAIAIV. At 114 to 118 the chain is on the cytoplasmic side; that stretch reads QPKQV. The helical transmembrane segment at 119–149 threads the bilayer; the sequence is STDSFVINHSPQYTIAAVSSWVEFFIETYFF. Topologically, residues 150–155 are lumenal; it reads PGLKEI. The chain crosses the membrane as a helical span at residues 156-181; it reads HWLSNIGLCVCILGEVLRKTAILTAG. Residues 182–208 are Cytoplasmic-facing; that stretch reads SNFNHLVQCEKSSDHVLVTHGVYAWFR. Residues Q189, 196-199, Y204, and 209-212 contribute to the S-adenosyl-L-methionine site; these read HVLV and HPSY. A helical membrane pass occupies residues 209–226; sequence HPSYVGWFYWSIGTQIIL. At 227 to 229 the chain is on the lumenal side; the sequence is INP. Residues 230–243 traverse the membrane as a helical segment; sequence LCIPAYTLASWMFF. At 244 to 281 the chain is on the cytoplasmic side; the sequence is KERIYIEESMLLSFFGQQYCDYQQQVGTGIPFIEGYKI. R246 contacts substrate. Residue E250 participates in S-adenosyl-L-methionine binding.

The protein belongs to the class VI-like SAM-binding methyltransferase superfamily. Isoprenylcysteine carboxyl methyltransferase family.

Its subcellular location is the endoplasmic reticulum membrane. It catalyses the reaction [protein]-C-terminal S-[(2E,6E)-farnesyl]-L-cysteine + S-adenosyl-L-methionine = [protein]-C-terminal S-[(2E,6E)-farnesyl]-L-cysteine methyl ester + S-adenosyl-L-homocysteine. Catalyzes the post-translational methylation of isoprenylated C-terminal cysteine residues. The polypeptide is Protein-S-isoprenylcysteine O-methyltransferase (Tribolium castaneum (Red flour beetle)).